Consider the following 897-residue polypeptide: Interleukin enhancer-binding factor 3-A (897 aa).

The 375-residue stretch at 5 to 379 (RIFLNDDRHV…PLKRPIEEDG (375 aa)) folds into the DZF domain. Disordered stretches follow at residues 52–85 (QEKD…GENP), 364–403 (TTYA…PPQV), and 466–502 (MGLP…EVDS). 2 stretches are compositionally biased toward basic and acidic residues: residues 72–81 (EEGKDSEMKT) and 373–384 (RPIEEDGDDKSP). The short motif at 372 to 390 (KRPIEEDGDDKSPSKKKKK) is the Bipartite nuclear localization signal element. 2 consecutive DRBM domains span residues 399–468 (EPPQ…DMGL) and 521–587 (HGKN…KLFP). 2 disordered regions span residues 627-650 (PPPQ…GRGG) and 708-797 (GDSY…AQGA). Residues 637-650 (RGGMNRGRGRGRGG) show a composition bias toward gly residues. Positions 714–747 (PTPPKPFVNKKPPPPQQQQQQQPPPQHASNPPKP) are enriched in pro residues. Low complexity predominate over residues 749–794 (YNQGYQGHQGGQQQQQQQQQQQTYNQNQYSNYGPPQKQKGGYNQGA).

As to quaternary structure, a component of a ybx2/frgy2-containing mRNA-ribonucleoprotein (mRNP) complex. Also a component of the CCAAT box transcription factor (CBTF) complex. In terms of processing, phosphorylated. Phosphorylation affects nuclear translocation. Post-translationally, methylated by protein arginine N-methyltransferase 1 (prmt1b) in the RGG-rich domain. Methylation decreases DNA-binding and thereby decreases transcription of the gata2 gene, but does not regulate dsRNA binding or subcellular localization. In terms of tissue distribution, expressed mainly in the ectoderm (at protein level).

The protein localises to the nucleus. Its subcellular location is the cytoplasm. Functionally, RNA-binding protein that plays an essential role in the biogenesis of circular RNAs (circRNAs) which are produced by back-splicing circularization of pre-mRNAs. Within the nucleus, promotes circRNAs processing by stabilizing the regulatory elements residing in the flanking introns of the circularized exons. Plays thereby a role in the back-splicing of a subset of circRNAs. As a consequence, participates in a wide range of transcriptional and post-transcriptional processes. Binds to poly-U elements and AU-rich elements (AREs) in the 3'-UTR of target mRNAs. Upon viral infection, ILF3 accumulates in the cytoplasm and participates in the innate antiviral response. Mechanistically, ILF3 becomes phosphorylated and activated by the double-stranded RNA-activated protein kinase/PKR which releases ILF3 from cellular mature circRNAs. In turn, unbound ILF3 molecules are able to interact with and thus inhibit viral mRNAs. Has a cytoplasmic role early in development as part of a ribonucleoprotein (mRNP) complex which may regulate mRNA transport and/or translation. Following nuclear localization at the mid-blastula transition, acts as a transcription factor and binds the 5'-CCAAT-3' promoter sequence to regulate transcription of the gata2 gene as a subunit of the CCAAT box transcription factor (CBTF). Its role as an mRNP component negatively regulates its activity as a transcription factor by precluding its nuclear localization. This chain is Interleukin enhancer-binding factor 3-A (ilf3-a), found in Xenopus laevis (African clawed frog).